The following is a 689-amino-acid chain: Collagen alpha-2(IX) chain (689 aa).

A signal peptide spans 1 to 23 (MAAATASPRSLLVLLQVVVLALA). The disordered stretch occupies residues 26–518 (RGPPGERGPP…QPGRQGVEGR (493 aa)). A triple-helical region 4 (COL4) region spans residues 27 to 163 (GPPGERGPPG…PGKPGRPGTI (137 aa)). Pro residues predominate over residues 31 to 43 (ERGPPGPPGPPGV). Positions 44 to 56 (PGSDGIDGDNGPP) are enriched in low complexity. Composition is skewed to pro residues over residues 106–127 (LPGPPGLPGPGFAGPPGPPGPV) and 144–157 (PDGPSGPPGPPGKP). Pro160 carries the post-translational modification 4-hydroxyproline. The interval 164-180 (QGLEGSADFLCPTNCPP) is nonhelical region 4 (NC4). A glycan (O-linked (Xyl...) (glycosaminoglycan) serine) is linked at Ser169. The tract at residues 181 to 519 (GMKGPPGLQG…PGRQGVEGRD (339 aa)) is triple-helical region 3 (COL3). Lys183 is modified (5-hydroxylysine). Lys183 carries an O-linked (Gal...) hydroxylysine glycan. Over residues 343–352 (GTKGGPGDQG) the composition is skewed to gly residues. 2 stretches are compositionally biased toward low complexity: residues 353–366 (EPGPQGLPGFSGPP) and 393–413 (RGPVGQPGPQGRQGPKGEQGP). The segment at 520-549 (ATDQHIVDVALKMLQEQLAEVAVSAKREAL) is nonhelical region 3 (NC3). Residues 550 to 632 (GAVGMMGPPG…PGLPGRPGQA (83 aa)) form a triple-helical region 2 (COL2) region. Positions 554 to 663 (MMGPPGPPGP…LPGPVGLPGF (110 aa)) are disordered. Residues 557–566 (PPGPPGPPGY) are compositionally biased toward pro residues. Basic and acidic residues predominate over residues 599-611 (KRGEKGDPGEVGR). The interval 633–634 (IN) is nonhelical region 2 (NC2). Residues 635–664 (GKDGDRGSPGAPGEAGRPGLPGPVGLPGFC) form a triple-helical region 1 (COL1) region. Positions 665–689 (EPAACLGASAYASARLTEPGSIKGP) are nonhelical region 1 (NC1).

Belongs to the fibril-associated collagens with interrupted helices (FACIT) family. Heterotrimer of an alpha 1(IX), an alpha 2(IX) and an alpha 3(IX) chain. The chains are linked to each other by interchain disulfide bonds. Trimers are also cross-linked via hydroxylysines. Covalently linked to the telopeptides of type II collagen by lysine-derived cross-links. Post-translationally, prolines at the third position of the tripeptide repeating unit (G-X-Y) are hydroxylated in some or all of the chains.

It is found in the secreted. It localises to the extracellular space. The protein resides in the extracellular matrix. In terms of biological role, structural component of hyaline cartilage and vitreous of the eye. The sequence is that of Collagen alpha-2(IX) chain from Homo sapiens (Human).